Here is a 470-residue protein sequence, read N- to C-terminus: Syncoilin (470 aa).

Residues 1–43 (MASPEPLRGGDGARASREPHTEASFPLQESESPKEAKTFNPEA) form a disordered region. A head region spans residues 1 to 148 (MASPEPLRGG…TEGSLPAQPI (148 aa)). Position 32 is a phosphoserine (Ser-32). The 296-residue stretch at 157–452 (SVEDLERLEA…AMLPKSLEQA (296 aa)) folds into the IF rod domain. Residues 158-192 (VEDLERLEARFQQCVQAVSQLEEERDQLIHELVLL) are coil 1A. The interval 193 to 219 (REPALQEVQQVHQDILAAYKLHAQAEL) is linker 1. Residues 220 to 297 (ERDGLREEIR…KEQLQQQLEA (78 aa)) form a coil 1b region. Residues 298 to 337 (PPTQSDGHFLQESRRLSTQFENLMAESRQGLEEEYEPQLL) are linker 2. Ser-314 bears the Phosphoserine mark. The interval 338-445 (RLLERKEAGT…EELSTYKAML (108 aa)) is coil 2. Positions 446 to 470 (PKSLEQADAPTSQAGGVEAQSPGTV) are disordered. The interval 446-470 (PKSLEQADAPTSQAGGVEAQSPGTV) is tail.

Belongs to the intermediate filament family. May link the dystrophin-associated glycoprotein complex (DAPC) to intracellular desmin (DES) filaments. Interacts with DES and DTNA. Detected strongly in skeletal muscle and heart and weakly in lung (at protein level). Highly expressed in skeletal muscle and lung and weakly in lung and testis.

It localises to the cytoplasm. It is found in the perinuclear region. In terms of biological role, atypical type III intermediate filament (IF) protein that may play a supportive role in the efficient coupling of mechanical stress between the myofibril and fiber exterior. May facilitate lateral force transmission during skeletal muscle contraction. Does not form homofilaments nor heterofilaments with other IF proteins. The sequence is that of Syncoilin (Sync) from Mus musculus (Mouse).